A 500-amino-acid chain; its full sequence is Probable cytosol aminopeptidase (500 aa).

Mn(2+) contacts are provided by lysine 265 and aspartate 270. The active site involves lysine 277. Residues aspartate 288, aspartate 347, and glutamate 349 each coordinate Mn(2+). Residue arginine 351 is part of the active site.

Belongs to the peptidase M17 family. The cofactor is Mn(2+).

The protein localises to the cytoplasm. It carries out the reaction Release of an N-terminal amino acid, Xaa-|-Yaa-, in which Xaa is preferably Leu, but may be other amino acids including Pro although not Arg or Lys, and Yaa may be Pro. Amino acid amides and methyl esters are also readily hydrolyzed, but rates on arylamides are exceedingly low.. The catalysed reaction is Release of an N-terminal amino acid, preferentially leucine, but not glutamic or aspartic acids.. Functionally, presumably involved in the processing and regular turnover of intracellular proteins. Catalyzes the removal of unsubstituted N-terminal amino acids from various peptides. The chain is Probable cytosol aminopeptidase from Corynebacterium glutamicum (strain ATCC 13032 / DSM 20300 / JCM 1318 / BCRC 11384 / CCUG 27702 / LMG 3730 / NBRC 12168 / NCIMB 10025 / NRRL B-2784 / 534).